The following is a 481-amino-acid chain: Cytochrome c oxidase subunit 1 (481 aa).

The helical transmembrane segment at 22 to 42 threads the bilayer; that stretch reads ISYLWLAYWFGMIGFYMSVLI. Ca(2+) is bound by residues Glu-45 and Gly-50. The next 8 helical transmembrane spans lie at 64 to 84, 109 to 129, 151 to 171, 194 to 214, 240 to 260, 278 to 298, 309 to 329, and 343 to 363; these read LLFT…GLFG, SLLF…LEIG, FIIF…VNFI, IVLT…VFLM, LFWF…FGII, MILA…TSYV, YFTT…FNWV, and LVLF…TGVV. Position 69 (His-69) interacts with Fe(II)-heme a. His-246 contacts Cu cation. A cross-link (1'-histidyl-3'-tyrosine (His-Tyr)) is located at residues 246–250; it reads HPEVY. Tyr-250 is an O2 binding site. Positions 374 and 375 each coordinate Mg(2+). His-382 is a heme a3 binding site. Transmembrane regions (helical) follow at residues 382 to 402 and 420 to 440; these read HFHF…IIYI and IAPI…FTGF. His-384 is a Fe(II)-heme a binding site. Residue Pro-448 participates in Ca(2+) binding. Residues 459 to 479 traverse the membrane as a helical segment; sequence FICTLGATMMLVLKLAILFII.

The protein belongs to the heme-copper respiratory oxidase family. As to quaternary structure, component of the cytochrome c oxidase (complex IV, CIV), a multisubunit enzyme composed of a catalytic core of 3 subunits and several supernumerary subunits. The complex exists as a monomer or a dimer and forms supercomplexes (SCs) in the inner mitochondrial membrane with ubiquinol-cytochrome c oxidoreductase (cytochrome b-c1 complex, complex III, CIII). It depends on heme as a cofactor. Cu cation serves as cofactor.

Its subcellular location is the mitochondrion inner membrane. It catalyses the reaction 4 Fe(II)-[cytochrome c] + O2 + 8 H(+)(in) = 4 Fe(III)-[cytochrome c] + 2 H2O + 4 H(+)(out). It participates in energy metabolism; oxidative phosphorylation. Its function is as follows. Component of the cytochrome c oxidase, the last enzyme in the mitochondrial electron transport chain which drives oxidative phosphorylation. The respiratory chain contains 3 multisubunit complexes succinate dehydrogenase (complex II, CII), ubiquinol-cytochrome c oxidoreductase (cytochrome b-c1 complex, complex III, CIII) and cytochrome c oxidase (complex IV, CIV), that cooperate to transfer electrons derived from NADH and succinate to molecular oxygen, creating an electrochemical gradient over the inner membrane that drives transmembrane transport and the ATP synthase. Cytochrome c oxidase is the component of the respiratory chain that catalyzes the reduction of oxygen to water. Electrons originating from reduced cytochrome c in the intermembrane space (IMS) are transferred via the dinuclear copper A center (CU(A)) of subunit 2 and heme A of subunit 1 to the active site in subunit 1, a binuclear center (BNC) formed by heme A3 and copper B (CU(B)). The BNC reduces molecular oxygen to 2 water molecules using 4 electrons from cytochrome c in the IMS and 4 protons from the mitochondrial matrix. The polypeptide is Cytochrome c oxidase subunit 1 (MT-CO1) (Theileria parva (East coast fever infection agent)).